The primary structure comprises 553 residues: Putative transport protein Ent638_0015 (553 aa).

5 helical membrane passes run 4–24 (IALTVSVLALVAVVGLWIGNI), 28–48 (GVGLGIGGVLFGGIFIGHFAE), 65–85 (FGLILFVYTIGIQVGPGFFAS), 95–115 (LFALGIVVMGGVVTAILHKLF), and 158–178 (MSYAMAYPFGICGILLTMWLV). 2 consecutive RCK C-terminal domains span residues 191–276 (KKHE…VIGQ) and 279–361 (ETSL…MVGN). Transmembrane regions (helical) follow at residues 371 to 391 (MLPVFIGIGLGVLLGSIPLYV), 403 to 425 (AGGPLIMALILGRIGCIGKLYWF), 439 to 459 (IVLFLSVVGLKSGGDFIDTLA), 464 to 484 (ISWIGYGFFITAVPLLTIGIL), 493 to 513 (YLTLCGMLAGSMTDPPALAFA), and 533 to 553 (LVMFLRIITPQLLAVLFWGMG).

The protein belongs to the AAE transporter (TC 2.A.81) family. YidE subfamily.

It is found in the cell membrane. This chain is Putative transport protein Ent638_0015, found in Enterobacter sp. (strain 638).